A 139-amino-acid chain; its full sequence is Hydrogenase maturation factor HypA (139 aa).

Histidine 2 is a Ni(2+) binding site. Residues cysteine 73, cysteine 76, cysteine 110, and cysteine 113 each contribute to the Zn(2+) site.

Belongs to the HypA/HybF family.

Its function is as follows. Involved in the maturation of [NiFe] hydrogenases. Required for nickel insertion into the metal center of the hydrogenase. The sequence is that of Hydrogenase maturation factor HypA from Thermococcus gammatolerans (strain DSM 15229 / JCM 11827 / EJ3).